Here is a 157-residue protein sequence, read N- to C-terminus: Crossover junction endodeoxyribonuclease RuvC (157 aa).

Catalysis depends on residues Asp-7, Glu-67, and Asp-140. Residues Asp-7, Glu-67, and Asp-140 each coordinate Mg(2+).

Belongs to the RuvC family. Homodimer which binds Holliday junction (HJ) DNA. The HJ becomes 2-fold symmetrical on binding to RuvC with unstacked arms; it has a different conformation from HJ DNA in complex with RuvA. In the full resolvosome a probable DNA-RuvA(4)-RuvB(12)-RuvC(2) complex forms which resolves the HJ. It depends on Mg(2+) as a cofactor.

The protein resides in the cytoplasm. The catalysed reaction is Endonucleolytic cleavage at a junction such as a reciprocal single-stranded crossover between two homologous DNA duplexes (Holliday junction).. The RuvA-RuvB-RuvC complex processes Holliday junction (HJ) DNA during genetic recombination and DNA repair. Endonuclease that resolves HJ intermediates. Cleaves cruciform DNA by making single-stranded nicks across the HJ at symmetrical positions within the homologous arms, yielding a 5'-phosphate and a 3'-hydroxyl group; requires a central core of homology in the junction. The consensus cleavage sequence is 5'-(A/T)TT(C/G)-3'. Cleavage occurs on the 3'-side of the TT dinucleotide at the point of strand exchange. HJ branch migration catalyzed by RuvA-RuvB allows RuvC to scan DNA until it finds its consensus sequence, where it cleaves and resolves the cruciform DNA. This Rickettsia prowazekii (strain Madrid E) protein is Crossover junction endodeoxyribonuclease RuvC.